Consider the following 215-residue polypeptide: uncharacterized protein (215 aa).

A run of 6 helical transmembrane segments spans residues 3-23 (LLAY…LRSI), 30-50 (ANLL…GLTW), 59-79 (LGLS…LRFW), 87-107 (WGTY…AICV), 122-142 (VSTC…SNIY), and 156-176 (VLFG…LIYV).

Belongs to the major facilitator superfamily. Allantoate permease family.

It localises to the membrane. This is an uncharacterized protein from Saccharomyces cerevisiae (strain ATCC 204508 / S288c) (Baker's yeast).